A 1295-amino-acid chain; its full sequence is DNA (cytosine-5)-methyltransferase CMT2 (1295 aa).

Disordered regions lie at residues 1-23 (MLSP…SSSR), 61-91 (RRST…GKSQ), and 249-287 (NSSK…GKGM). A compositionally biased stretch (polar residues) spans 61 to 72 (RRSTTLNCNSPE). Positions 578–693 (HTFSLGDFAY…VEYSTFQTLR (116 aa)) constitute a BAH domain. The 542-residue stretch at 727–1268 (LPVLDLYSGC…YSLGMAFRGL (542 aa)) folds into the SAM-dependent MTase C5-type domain. The disordered stretch occupies residues 814-835 (SVNSTKETSGSSSSSDDDSDSE). The region spanning 837 to 902 (YEVEKLVDIC…SGFKSKILPL (66 aa)) is the Chromo domain. The active site involves Cys915.

The protein belongs to the class I-like SAM-binding methyltransferase superfamily. C5-methyltransferase family.

It localises to the nucleus. It catalyses the reaction a 2'-deoxycytidine in DNA + S-adenosyl-L-methionine = a 5-methyl-2'-deoxycytidine in DNA + S-adenosyl-L-homocysteine + H(+). Functionally, may be involved in the CpXpG methylation and in gene silencing. The protein is DNA (cytosine-5)-methyltransferase CMT2 (CMT2) of Arabidopsis thaliana (Mouse-ear cress).